Reading from the N-terminus, the 207-residue chain is MSSVIAQKDENVVWHQHAVTKTQRADLKQQKPAVLWFTGLSGAGKSTVAGALENRLAEQGFHTYLLDGDNVRHGLCSDLGFSTQDRRENIRRIGELAKLMADAGLIVLTAFISPHRAERQLVRDLLPEGEFIEVFVNTSLEVCEQRDPKGLYKKARAGEIANFTGIDSEYEVPLNPEIDLPAGEKGIEALVDLLVEQLTLRGVISPR.

Residue 39-46 participates in ATP binding; the sequence is GLSGAGKS. Ser113 serves as the catalytic Phosphoserine intermediate.

The protein belongs to the APS kinase family.

The enzyme catalyses adenosine 5'-phosphosulfate + ATP = 3'-phosphoadenylyl sulfate + ADP + H(+). Its pathway is sulfur metabolism; hydrogen sulfide biosynthesis; sulfite from sulfate: step 2/3. Catalyzes the synthesis of activated sulfate. In Vibrio vulnificus (strain CMCP6), this protein is Adenylyl-sulfate kinase.